We begin with the raw amino-acid sequence, 100 residues long: MTEVGWWKLTFLRKKKSTPKVLYEIPDTYTQSEGGAEPPRPDSGNPNSNFNTRLEKIVDKNTKGKHVKVSNSGRFKEKKKVRASLAENPNLFDDREGKGQ.

Residues P26–Q100 form a disordered region. Positions R53–T62 are enriched in basic and acidic residues.

This sequence belongs to the PRR15 family.

This is Proline-rich protein 15-like protein (PRR15L) from Bos taurus (Bovine).